The chain runs to 481 residues: Guanine nucleotide exchange factor C9orf72 (481 aa).

Positions serine 23–serine 194 constitute a uDENN C9ORF72-type domain. Residues aspartate 200–threonine 343 form the cDENN C9ORF72-type domain. Positions valine 370 to phenylalanine 464 constitute a dDENN C9ORF72-type domain. Residues serine 461–phenylalanine 481 are required for the homodimerization of the C9orf72-SMCR8 complex.

As to quaternary structure, component of the C9orf72-SMCR8 complex, at least composed of C9orf72, SMCR8 and WDR41. The complex is formed of two protomers, each individually consisting of one molecule each of C9orf72, SMCR8 and WDR41. The protomers homodimerize via an interaction between C9orf72 (via C-terminus) and SMCR8 (via N-terminus). Within each protomer SMCR8 (via DENN domain) acts as a bridging protein between WDR41 (via C-terminus and N-terminus) and C9orf72 (via C-terminus). The C9orf72-SMCR8 complex associates with the ULK1/ATG1 kinase complex. Interacts with ULK1/ATG1 kinase complex members ULK1, ATG13 and RB1CC1. Interacts with SMCR8; the interaction is direct. Interacts with HNRNPA1, HNRNPA2B1 and UBQLN2. Interacts with small Rab GTPase RAB1A; the interaction mediates recruitment of RAB1A to the ULK1/ATG1 kinase complex. Also interacts with small Rab GTPase RAB7A. Interacts with cofilin. Interacts with GTP-binding proteins ARF1 and ARF6. Interacts with the DLG4/PSD-95. Interacts with CARM1 (via PH domain-like fold). Interacts with RAB39A and RAB39B (in GDP-bound forms); functions as GEF for RAB39A and RAB39B. Both isoforms are widely expressed, including kidney, lung, liver, heart, testis and several brain regions, such as cerebellum. Also expressed in the frontal cortex and in lymphoblasts (at protein level).

The protein localises to the cytoplasm. It is found in the nucleus. Its subcellular location is the P-body. The protein resides in the stress granule. It localises to the endosome. The protein localises to the lysosome. It is found in the cytoplasmic vesicle. Its subcellular location is the autophagosome. The protein resides in the autolysosome. It localises to the secreted. The protein localises to the cell projection. It is found in the axon. Its subcellular location is the growth cone. The protein resides in the perikaryon. It localises to the dendrite. The protein localises to the presynapse. It is found in the postsynapse. Its subcellular location is the nucleus membrane. Its function is as follows. Acts as a guanine-nucleotide releasing factor (GEF) for Rab GTPases by promoting the conversion of inactive RAB-GDP to the active form RAB-GTP. Acts as a GEF for RAB39A which enables HOPS-mediated autophagosome-lysosome membrane tethering and fusion in mammalian autophagy. Component of the C9orf72-SMCR8 complex where both subunits display GEF activity and that regulates autophagy. As part of the C9orf72-SMCR8-WDR41 (CSW) complex, functions as GEF for RAB8A and RAB39B, thereby promoting autophagosome maturation. As part of the C9orf72-SMCR8 complex, also functions as GTPase activating protein (GAP) for RAB8A and RAB11A in vitro. The C9orf72-SMCR8 complex also acts as a regulator of autophagy initiation by interacting with the ULK1/ATG1 kinase complex and modulating its protein kinase activity. Promotes initiation of autophagy by regulating the RAB1A-dependent trafficking of the ULK1/ATG1 kinase complex to the phagophore which leads to autophagosome formation. Acts as a regulator of mTORC1 signaling by promoting phosphorylation of mTORC1 substrates. Plays a role in endosomal trafficking. May be involved in regulating the maturation of phagosomes to lysosomes. Promotes the lysosomal localization and lysosome-mediated degradation of CARM1 which leads to inhibition of starvation-induced lipid metabolism. Regulates actin dynamics in motor neurons by inhibiting the GTP-binding activity of ARF6, leading to ARF6 inactivation. This reduces the activity of the LIMK1 and LIMK2 kinases which are responsible for phosphorylation and inactivation of cofilin, leading to CFL1/cofilin activation. Positively regulates axon extension and axon growth cone size in spinal motor neurons. Required for SMCR8 protein expression and localization at pre- and post-synaptic compartments in the forebrain, also regulates protein abundance of RAB3A and GRIA1/GLUR1 in post-synaptic compartments in the forebrain and hippocampus. Plays a role within the hematopoietic system in restricting inflammation and the development of autoimmunity. Regulates stress granule assembly in response to cellular stress. Functionally, does not play a role in regulation of stress granule assembly in response to cellular stress. The polypeptide is Guanine nucleotide exchange factor C9orf72 (Homo sapiens (Human)).